A 488-amino-acid polypeptide reads, in one-letter code: Ribulose bisphosphate carboxylase large chain (488 aa).

The substrate site is built by N128 and T178. The active-site Proton acceptor is the K180. K182 is a substrate binding site. Mg(2+) contacts are provided by K206, D208, and E209. An N6-carboxylysine modification is found at K206. H298 (proton acceptor) is an active-site residue. Substrate-binding residues include R299, H331, and S383.

It belongs to the RuBisCO large chain family. Type I subfamily. Heterohexadecamer of 8 large chains and 8 small chains. Requires Mg(2+) as cofactor.

It carries out the reaction 2 (2R)-3-phosphoglycerate + 2 H(+) = D-ribulose 1,5-bisphosphate + CO2 + H2O. The enzyme catalyses D-ribulose 1,5-bisphosphate + O2 = 2-phosphoglycolate + (2R)-3-phosphoglycerate + 2 H(+). RuBisCO catalyzes two reactions: the carboxylation of D-ribulose 1,5-bisphosphate, the primary event in carbon dioxide fixation, as well as the oxidative fragmentation of the pentose substrate. Both reactions occur simultaneously and in competition at the same active site. In Xanthobacter autotrophicus (strain ATCC BAA-1158 / Py2), this protein is Ribulose bisphosphate carboxylase large chain.